The primary structure comprises 408 residues: COP9 signalosome complex subunit 4 (408 aa).

Residues 194 to 374 (RIQDARRRFL…GIIYFESNTT (181 aa)) enclose the PCI domain.

Belongs to the CSN4 family. In terms of assembly, component of the COP9 signalosome (CSN) complex.

The protein resides in the cytoplasm. It is found in the nucleus. Its function is as follows. Component of the COP9 signalosome (CSN) complex that acts as an regulator of the ubiquitin (Ubl) conjugation pathway by mediating the deneddylation of the cullin subunit of SCF-type E3 ubiquitin-protein ligase complexes. The CSN complex seems to link protein degradation to sexual development. Required for fruit body formation. The chain is COP9 signalosome complex subunit 4 (csnD) from Emericella nidulans (strain FGSC A4 / ATCC 38163 / CBS 112.46 / NRRL 194 / M139) (Aspergillus nidulans).